The sequence spans 86 residues: Large ribosomal subunit protein eL43 (86 aa).

The C4-type zinc finger occupies 38 to 60 (CPFCGHKGKVYRLSTGVWACKKC).

This sequence belongs to the eukaryotic ribosomal protein eL43 family. The cofactor is Zn(2+).

In Desulfurococcus amylolyticus (strain DSM 18924 / JCM 16383 / VKM B-2413 / 1221n) (Desulfurococcus kamchatkensis), this protein is Large ribosomal subunit protein eL43.